The primary structure comprises 271 residues: MERRTVLITGCSQGGIGSALAEVFHQRGFHVFATARKTEKMKHLRDLDRMTLIPLDVTQESQISAAVELIQKHTGGTLDYLVNNAGDGYIIPVLDCDQLHGRQIFEVNFWGPLRMIQEFSPLLIAARGTIVNINSVASETLPLWLGIYSSSKAALLALSETLRLELKPFGVQVLSVMTGAVQTMIFQTNYRLPPDSAYMTWEKQIAAQAEGSEKASRMSATVYAERVVGDILNRQGGITYRGQMASFAYWVVALMPRFLRATPLLAQVGSQ.

I8, T34, K40, D56, N84, Y148, K152, V181, and T183 together coordinate NADP(+). The Proton acceptor role is filled by Y148. The active-site Lowers pKa of active site Tyr is K152.

The protein belongs to the short-chain dehydrogenases/reductases (SDR) family.

It participates in secondary metabolite biosynthesis. Short-chain dehydrogenase; part of the gene cluster that mediates the biosynthesis of the indole diterpenes penitrems. The geranylgeranyl diphosphate (GGPP) synthase penG catalyzes the first step in penitrem biosynthesis via conversion of farnesyl pyrophosphate and isopentyl pyrophosphate into geranylgeranyl pyrophosphate (GGPP). Condensation of indole-3-glycerol phosphate with GGPP by the prenyl transferase penC then forms 3-geranylgeranylindole (3-GGI). Epoxidation by the FAD-dependent monooxygenase penM leads to a epoxidized-GGI that is substrate of the terpene cyclase penB for cyclization to yield paspaline. Paspaline is subsequently converted to 13-desoxypaxilline by the cytochrome P450 monooxygenase penP, the latter being then converted to paxilline by the cytochrome P450 monooxygenase penQ. Paxilline is converted to beta-paxitriol via C-10 ketoreduction by the short-chain dehydrogenase PC-15 which can be monoprenylated at the C-20 by the indole diterpene prenyltransferase penD. A two-step elimination (acetylation and elimination) process performed by the O-acetyltransferase PC-16 and the P.simplicissimum ptmI-ortholog not yet identified in P.crustosum, leads to the production of the prenylated form of penijanthine. The FAD-linked oxidoreductase ptmO then converts the prenylated form of penijanthine into PC-M5 which is in turn transformed into PC-M4 by the aromatic dimethylallyltransferase PC-22. A series of oxidation steps involving 4 cytochrome P450 monooxygenases (PC-21, PC-05, PC-23, PC-20) and a FAD-dependent monooxygenase (PC-14) are required for the transformation of PC-M4 to penitrems A and E. Synthesis of these final products is proposed to proceed via penitrems D and C (PC-21, PC-05, PC-14) and penitrems B and F (PC-21, PC-05, PC-14, PC-23). The chain is Short-chain dehydrogenase PC-15 from Penicillium crustosum (Blue mold fungus).